Consider the following 215-residue polypeptide: Cardiolipin synthase (CMP-forming) (215 aa).

A run of 5 helical transmembrane segments spans residues 29–49 (IPNILSMARLAGVPLFLWLIL), 60–80 (GWALLVLALSGVSDYLDGKLA), 117–137 (LWLTLVLLAREAMLLVMVGIL), 158–178 (LMYAFPLLLLSDGSGWIASLA), and 179–199 (AVFGWAFAGWGTTLYWWAGVL).

Belongs to the CDP-alcohol phosphatidyltransferase class-I family. A divalent metal cation is required as a cofactor.

Its subcellular location is the cell membrane. It carries out the reaction a CDP-1,2-diacyl-sn-glycerol + a 1,2-diacyl-sn-glycero-3-phospho-(1'-sn-glycerol) = a cardiolipin + CMP + H(+). In terms of biological role, catalyzes the synthesis of cardiolipin (CL) (diphosphatidylglycerol) by specifically transferring a phosphatidyl group from CDP-diacylglycerol to phosphatidylglycerol (PG). This Streptomyces coelicolor (strain ATCC BAA-471 / A3(2) / M145) protein is Cardiolipin synthase (CMP-forming).